We begin with the raw amino-acid sequence, 375 residues long: Glutamate 5-kinase (375 aa).

Residue Lys13 coordinates ATP. Substrate contacts are provided by Ser54, Asp141, and Asn153. ATP is bound by residues 173-174 and 216-222; these read TD and TGGMATK. In terms of domain architecture, PUA spans 281–359; that stretch reads TGKIFIDAGA…EAIAAVLGYV (79 aa).

The protein belongs to the glutamate 5-kinase family.

The protein localises to the cytoplasm. It catalyses the reaction L-glutamate + ATP = L-glutamyl 5-phosphate + ADP. It functions in the pathway amino-acid biosynthesis; L-proline biosynthesis; L-glutamate 5-semialdehyde from L-glutamate: step 1/2. Catalyzes the transfer of a phosphate group to glutamate to form L-glutamate 5-phosphate. The chain is Glutamate 5-kinase from Synechocystis sp. (strain ATCC 27184 / PCC 6803 / Kazusa).